The following is a 549-amino-acid chain: Chaperonin GroEL (549 aa).

ATP is bound by residues threonine 30–proline 33, lysine 51, aspartate 87–threonine 91, glycine 415, asparagine 479–alanine 481, and aspartate 495.

This sequence belongs to the chaperonin (HSP60) family. In terms of assembly, forms a cylinder of 14 subunits composed of two heptameric rings stacked back-to-back. Interacts with the co-chaperonin GroES.

It localises to the cytoplasm. The catalysed reaction is ATP + H2O + a folded polypeptide = ADP + phosphate + an unfolded polypeptide.. In terms of biological role, together with its co-chaperonin GroES, plays an essential role in assisting protein folding. The GroEL-GroES system forms a nano-cage that allows encapsulation of the non-native substrate proteins and provides a physical environment optimized to promote and accelerate protein folding. This is Chaperonin GroEL from Stenotrophomonas maltophilia (strain K279a).